A 251-amino-acid chain; its full sequence is MNKHERLDEIAKLVNKKGTIRTNEIVEGLNVSDMTVRRDLIELENKGILTKIHGGARSNSTFQYKEISHKEKHTRQIAEKRYIARKAASLIEDGDTLFFGPGTTVELLAEEVNHHTLTIITNCLPVYKILLEKQTAHFRVYLIGGEMRHITEAFVGEMANAMLEKLRFSKMFFSSNAVNKGAVMTSTLDEAYTQQLALSNSIEKYLLIDHTKVGKEDFTSFCQLNELTAVVMDYEDEEKVETIKTYIEVVD.

One can recognise an HTH deoR-type domain in the interval lysine 3–serine 58. Residues isoleucine 20–aspartate 39 constitute a DNA-binding region (H-T-H motif).

Its function is as follows. Repressor of the lactose catabolism operon. Galactose-6-phosphate is the inducer. This is Lactose phosphotransferase system repressor (lacR) from Staphylococcus aureus (strain N315).